Consider the following 342-residue polypeptide: GTPase Obg (342 aa).

Residues 1–159 (MKFLDLCKVY…RTIWLRLKLI (159 aa)) enclose the Obg domain. One can recognise an OBG-type G domain in the interval 160–327 (ADAGLLGLPN…VLRALWAEID (168 aa)). GTP contacts are provided by residues 166–173 (GLPNAGKS), 191–195 (FTTLV), 212–215 (DIPG), 279–282 (NKID), and 308–310 (SGV). 2 residues coordinate Mg(2+): Ser-173 and Thr-193.

The protein belongs to the TRAFAC class OBG-HflX-like GTPase superfamily. OBG GTPase family. In terms of assembly, monomer. It depends on Mg(2+) as a cofactor.

It localises to the cytoplasm. Functionally, an essential GTPase which binds GTP, GDP and possibly (p)ppGpp with moderate affinity, with high nucleotide exchange rates and a fairly low GTP hydrolysis rate. Plays a role in control of the cell cycle, stress response, ribosome biogenesis and in those bacteria that undergo differentiation, in morphogenesis control. This is GTPase Obg from Cereibacter sphaeroides (strain ATCC 17029 / ATH 2.4.9) (Rhodobacter sphaeroides).